The following is a 408-amino-acid chain: Imidazolonepropionase (408 aa).

Residues H73 and H75 each contribute to the Fe(3+) site. 2 residues coordinate Zn(2+): H73 and H75. R82, Y145, and H178 together coordinate 4-imidazolone-5-propanoate. Y145 serves as a coordination point for N-formimidoyl-L-glutamate. H243 serves as a coordination point for Fe(3+). H243 contacts Zn(2+). Residue Q246 participates in 4-imidazolone-5-propanoate binding. D318 serves as a coordination point for Fe(3+). D318 is a binding site for Zn(2+). N-formimidoyl-L-glutamate-binding residues include N320 and G322. A 4-imidazolone-5-propanoate-binding site is contributed by S323.

The protein belongs to the metallo-dependent hydrolases superfamily. HutI family. The cofactor is Zn(2+). It depends on Fe(3+) as a cofactor.

Its subcellular location is the cytoplasm. The enzyme catalyses 4-imidazolone-5-propanoate + H2O = N-formimidoyl-L-glutamate. Its pathway is amino-acid degradation; L-histidine degradation into L-glutamate; N-formimidoyl-L-glutamate from L-histidine: step 3/3. Its function is as follows. Catalyzes the hydrolytic cleavage of the carbon-nitrogen bond in imidazolone-5-propanoate to yield N-formimidoyl-L-glutamate. It is the third step in the universal histidine degradation pathway. This chain is Imidazolonepropionase, found in Shewanella putrefaciens (strain CN-32 / ATCC BAA-453).